The following is a 235-amino-acid chain: Probable transcriptional regulatory protein CJJ81176_1187 (235 aa).

The protein belongs to the TACO1 family.

Its subcellular location is the cytoplasm. The protein is Probable transcriptional regulatory protein CJJ81176_1187 of Campylobacter jejuni subsp. jejuni serotype O:23/36 (strain 81-176).